The chain runs to 235 residues: Carboxy-S-adenosyl-L-methionine synthase (235 aa).

Residues Tyr-35, 60 to 62, 83 to 84, Asn-124, and Arg-191 contribute to the S-adenosyl-L-methionine site; these read GCS and DN.

This sequence belongs to the class I-like SAM-binding methyltransferase superfamily. Cx-SAM synthase family. As to quaternary structure, homodimer.

It catalyses the reaction prephenate + S-adenosyl-L-methionine = carboxy-S-adenosyl-L-methionine + 3-phenylpyruvate + H2O. Functionally, catalyzes the conversion of S-adenosyl-L-methionine (SAM) to carboxy-S-adenosyl-L-methionine (Cx-SAM). The protein is Carboxy-S-adenosyl-L-methionine synthase of Campylobacter jejuni subsp. jejuni serotype O:6 (strain 81116 / NCTC 11828).